Consider the following 636-residue polypeptide: Sodium-dependent multivitamin transporter (636 aa).

Helical transmembrane passes span 24–44, 68–88, 101–121, 143–163, 176–196, 199–219, 256–276, 297–317, 336–356, 404–424, 428–448, and 456–476; these read FSLV…AIGL, CLPV…ILGV, FLGC…IPVF, ICGT…VLYA, LWLS…LGGL, VIWT…AVII, FWTL…VNQA, VFPC…VMFA, FVLY…GLFV, FGYG…GPVL, ISIF…GMFF, and AIVG…GSIV. 2 N-linked (GlcNAc...) asparagine glycosylation sites follow: asparagine 489 and asparagine 498. The chain crosses the membrane as a helical span at residues 528-548; it reads LWYSAHNSTTVIVVGLIVSLL. Residues 606 to 627 form a disordered region; that stretch reads LRASGDKEPMTEASPVHQGTSP.

This sequence belongs to the sodium:solute symporter (SSF) (TC 2.A.21) family. In terms of assembly, interacts with PDZD11.

The protein localises to the cell membrane. Its subcellular location is the apical cell membrane. The catalysed reaction is biotin(out) + 2 Na(+)(out) = biotin(in) + 2 Na(+)(in). It catalyses the reaction (R)-pantothenate(out) + 2 Na(+)(out) = (R)-pantothenate(in) + 2 Na(+)(in). The enzyme catalyses (R)-lipoate(out) + 2 Na(+)(out) = (R)-lipoate(in) + 2 Na(+)(in). It carries out the reaction iodide(out) + 2 Na(+)(out) = iodide(in) + 2 Na(+)(in). Functionally, sodium-dependent multivitamin transporter that mediates the electrogenic transport of pantothenate, biotin, lipoate and iodide. Functions as a Na(+)-coupled substrate symporter where the stoichiometry of Na(+):substrate is 2:1, creating an electrochemical Na(+) gradient used as driving force for substrate uptake. Required for biotin and pantothenate uptake in the intestine across the brush border membrane. Plays a role in the maintenance of intestinal mucosa integrity, by providing the gut mucosa with biotin. Contributes to the luminal uptake of biotin and pantothenate into the brain across the blood-brain barrier. In Oryctolagus cuniculus (Rabbit), this protein is Sodium-dependent multivitamin transporter (SLC5A6).